Consider the following 301-residue polypeptide: Ribonuclease Z (301 aa).

Zn(2+)-binding residues include H63, H65, D67, H68, H141, D204, and H262. The active-site Proton acceptor is the D67.

It belongs to the RNase Z family. Homodimer. It depends on Zn(2+) as a cofactor.

The enzyme catalyses Endonucleolytic cleavage of RNA, removing extra 3' nucleotides from tRNA precursor, generating 3' termini of tRNAs. A 3'-hydroxy group is left at the tRNA terminus and a 5'-phosphoryl group is left at the trailer molecule.. Functionally, zinc phosphodiesterase, which displays some tRNA 3'-processing endonuclease activity. Probably involved in tRNA maturation, by removing a 3'-trailer from precursor tRNA. In Streptomyces avermitilis (strain ATCC 31267 / DSM 46492 / JCM 5070 / NBRC 14893 / NCIMB 12804 / NRRL 8165 / MA-4680), this protein is Ribonuclease Z.